The chain runs to 323 residues: Transcription factor MafB (323 aa).

A Glycyl lysine isopeptide (Lys-Gly) (interchain with G-Cter in SUMO) cross-link involves residue Lys32. Positions 34–43 are enriched in basic and acidic residues; the sequence is EPLGRAERPG. Disordered stretches follow at residues 34 to 78 and 116 to 210; these read EPLG…PTEP and PVPQ…VEDR. The span at 54–77 shows a compositional bias: low complexity; the sequence is SVSSTPLSTPCSSVPSSPSFSPTE. 2 stretches are compositionally biased toward basic residues: residues 129 to 143 and 159 to 168; these read SAHH…HPHH and AHPHHHHHHQ. Low complexity predominate over residues 192–201; sequence PHATAAATAA. A basic motif region spans residues 238-263; it reads RLKQKRRTLKNRGYAQSCRYKRVQQK. The bZIP domain maps to 238 to 301; the sequence is RLKQKRRTLK…DAYKVKCEKL (64 aa). The segment at 266–287 is leucine-zipper; that stretch reads LENEKTQLIQQVEQLKQEVSRL. Residue Lys297 forms a Glycyl lysine isopeptide (Lys-Gly) (interchain with G-Cter in SUMO) linkage.

The protein belongs to the bZIP family. Maf subfamily. As to quaternary structure, homodimer or heterodimer with other bHLH-Zip transcription factors. Forms homodimers and heterodimers with FOS, FOSB and FOSL2, but not with JUN proteins (JUN, JUNB and JUND). Interacts with the intracellular cytoplasmic domain of LRP1 (LRPICD); the interaction results in a moderate reduction of MAFB transcriptional potential. Binds DNA as a homodimer or a heterodimer. Interacts with PAX6; the interaction is direct. Interacts with ETS1 and LRP1. Sumoylated. Sumoylation on Lys-32 and Lys-297 stimulates its transcriptional repression activity and promotes macrophage differentiation from myeloid progenitors. Expressed in pancreatic alpha-cells (glucagon-positive cells), in podocytes of the kidney and macrophages (at protein level). Most abundant in kidney, gut, lung and brain.

The protein resides in the nucleus. Its function is as follows. Acts as a transcriptional activator or repressor. Plays a pivotal role in regulating lineage-specific hematopoiesis by repressing ETS1-mediated transcription of erythroid-specific genes in myeloid cells. Required for monocytic, macrophage, osteoclast, podocyte and islet beta cell differentiation. Involved in renal tubule survival and F4/80 maturation. Activates the insulin and glucagon promoters. Together with PAX6, transactivates weakly the glucagon gene promoter through the G1 element. SUMO modification controls its transcriptional activity and ability to specify macrophage fate. Binds element G1 on the glucagon promoter. Involved either as an oncogene or as a tumor suppressor, depending on the cell context. Required for the transcriptional activation of HOXB3 in the rhombomere r5 in the hindbrain. This Mus musculus (Mouse) protein is Transcription factor MafB (Mafb).